Here is a 171-residue protein sequence, read N- to C-terminus: ATP synthase subunit b (171 aa).

A helical membrane pass occupies residues 2–22 (FVVKMVLGFLILLSPLCATGL).

The protein belongs to the ATPase B chain family. As to quaternary structure, F-type ATPases have 2 components, F(1) - the catalytic core - and F(0) - the membrane proton channel. F(1) has five subunits: alpha(3), beta(3), gamma(1), delta(1), epsilon(1). F(0) has three main subunits: a(1), b(2) and c(10-14). The alpha and beta chains form an alternating ring which encloses part of the gamma chain. F(1) is attached to F(0) by a central stalk formed by the gamma and epsilon chains, while a peripheral stalk is formed by the delta and b chains.

Its subcellular location is the cell inner membrane. In terms of biological role, f(1)F(0) ATP synthase produces ATP from ADP in the presence of a proton or sodium gradient. F-type ATPases consist of two structural domains, F(1) containing the extramembraneous catalytic core and F(0) containing the membrane proton channel, linked together by a central stalk and a peripheral stalk. During catalysis, ATP synthesis in the catalytic domain of F(1) is coupled via a rotary mechanism of the central stalk subunits to proton translocation. Functionally, component of the F(0) channel, it forms part of the peripheral stalk, linking F(1) to F(0). The protein is ATP synthase subunit b of Helicobacter pylori (strain ATCC 700392 / 26695) (Campylobacter pylori).